The sequence spans 431 residues: Peroxisomal biogenesis factor 3 (431 aa).

At 1 to 10 (MDFFRRHQKK) the chain is on the peroxisomal side. A helical transmembrane segment spans residues 11 to 28 (VLALVGVALSSYLFIDYV). At 29–431 (KKKFFEIQGR…VVYSSFDWAL (403 aa)) the chain is on the cytoplasmic side. The interval 95 to 126 (TDRVLALESSTSSSATAQTVPTMTSGATEEGE) is disordered. The span at 112–121 (QTVPTMTSGA) shows a compositional bias: polar residues.

This sequence belongs to the peroxin-3 family.

The protein localises to the peroxisome membrane. In terms of biological role, involved in peroxisome biosynthesis. Seems to directly or indirectly sequesters components of the peroxisome biogenesis machinery. The chain is Peroxisomal biogenesis factor 3 (PEX3) from Yarrowia lipolytica (strain CLIB 122 / E 150) (Yeast).